Consider the following 49-residue polypeptide: MSLYDYWVQFVSYIIGANAPEFLYVISFVLFIVLFFGMFFKLIQKMWSF.

A helical membrane pass occupies residues 23 to 43 (LYVISFVLFIVLFFGMFFKLI).

The protein localises to the host membrane. This is an uncharacterized protein from Spiroplasma melliferum (SpV1).